The primary structure comprises 393 residues: Protein TsgA (393 aa).

The next 12 membrane-spanning stretches (helical) occupy residues 11–31, 51–71, 78–98, 101–121, 134–154, 162–182, 206–226, 245–265, 273–293, 298–318, 332–352, and 361–381; these read WISF…GMVM, FLNA…EIVP, FGFI…SLAL, AAMF…TFLI, LLFT…VAAF, WYWV…LTFG, IGVL…LGFI, ALVS…SFIL, ILTV…TGTQ, WFIL…ITLG, FILT…GPIV, and LLTA…LGFV.

This sequence belongs to the major facilitator superfamily. TsgA family.

It is found in the cell inner membrane. The polypeptide is Protein TsgA (Salmonella heidelberg (strain SL476)).